We begin with the raw amino-acid sequence, 576 residues long: uncharacterized protein (576 aa).

Polar residues-rich tracts occupy residues 1-21 (MSTN…QSAS) and 28-40 (HTTS…TYQL). The segment at 1–40 (MSTNPNAGIQPLTNSISQSASAHPELYHTTSHESVSTYQL) is disordered. A run of 12 helical transmembrane segments spans residues 149 to 169 (FASS…HISL), 173 to 193 (LLTM…WAPL), 200 to 220 (KLPL…VAVA), 231 to 251 (FFSG…FADM), 261 to 281 (ITIF…IGGF), 291 to 311 (WTEY…YLFC), 366 to 386 (PIVF…YLLL), 401 to 421 (MGVA…GSAI), 446 to 466 (LPPM…LSWS), 472 to 492 (VHWI…LLIF), 503 to 525 (YLFR…AAGF), and 542 to 562 (GSLL…FFFF).

This sequence belongs to the major facilitator superfamily. CAR1 family.

The protein resides in the endoplasmic reticulum. It is found in the golgi apparatus. It localises to the membrane. This is an uncharacterized protein from Schizosaccharomyces pombe (strain 972 / ATCC 24843) (Fission yeast).